The primary structure comprises 117 residues: Ig kappa chain V region 12F2 (117 aa).

A signal peptide spans 1–6 (LPGARC). The segment at 7 to 29 (AYDMTQTPASVEVAVGGTVTIKC) is framework-1. Residues C29 and C86 are joined by a disulfide bond. The tract at residues 30-40 (QASQSISTYLS) is complementarity-determining-1. The framework-2 stretch occupies residues 41 to 55 (WYQQKPGQRPKLLIY). A complementarity-determining-2 region spans residues 56–62 (RASTLAS). The framework-3 stretch occupies residues 63–94 (GVSSRFKGSGSGTEFTLTISGVECADAATYYC). Positions 95 to 106 (QQGWSSSNVENV) are complementarity-determining-3. Residues 107–116 (FGGGTEVVVK) are framework-4.

In Oryctolagus cuniculus (Rabbit), this protein is Ig kappa chain V region 12F2.